The primary structure comprises 829 residues: Periplasmic nitrate reductase (829 aa).

An N-terminal signal peptide occupies residues Met1–Glu30. Positions Leu36 to Asp92 constitute a 4Fe-4S Mo/W bis-MGD-type domain. Cys43, Cys46, Cys50, and Cys78 together coordinate [4Fe-4S] cluster. Mo-bis(molybdopterin guanine dinucleotide) contacts are provided by residues Lys80, Gln147, Asn172, Cys176, Trp209–Met216, Ser240–His244, Gln259–Asp261, Met370, Gln374, Asn480, Ser506–Asp507, Lys529, Asp556, and Thr716–Thr725. Phe792 is a substrate binding site. Residues Asn800 and Lys817 each contribute to the Mo-bis(molybdopterin guanine dinucleotide) site.

The protein belongs to the prokaryotic molybdopterin-containing oxidoreductase family. NasA/NapA/NarB subfamily. Component of the periplasmic nitrate reductase NapAB complex composed of NapA and NapB. Requires [4Fe-4S] cluster as cofactor. Mo-bis(molybdopterin guanine dinucleotide) serves as cofactor.

It is found in the periplasm. It carries out the reaction 2 Fe(II)-[cytochrome] + nitrate + 2 H(+) = 2 Fe(III)-[cytochrome] + nitrite + H2O. Functionally, catalytic subunit of the periplasmic nitrate reductase complex NapAB. Receives electrons from NapB and catalyzes the reduction of nitrate to nitrite. This Pseudomonas aeruginosa (strain ATCC 15692 / DSM 22644 / CIP 104116 / JCM 14847 / LMG 12228 / 1C / PRS 101 / PAO1) protein is Periplasmic nitrate reductase.